The primary structure comprises 253 residues: MAANFWNSSHYKQLLDPEEVDVVHDLDKERGISIDDFKLIKFHMSNHIMKLAQHIKVRQRVVATAITYMRRVYIRKSMVEFEPRLVALTCLYLASKAEESIVQARNLVFYIKRLYPDEYNKYELKDILGMEMKVLEALDYYLVVFHPYRSLSEFLQDAALNDVNMNQITWGIVNDTYKMDLILVHPPYRIALACIYIASVHREKDITAWFEDLHEDMNLVKNIAMEILDFYENYRTITEEKVNSAFSKLALKL.

It belongs to the cyclin family. Cyclin C subfamily.

The sequence is that of Cyclin-C1-1 (CYCC1-1) from Arabidopsis thaliana (Mouse-ear cress).